The primary structure comprises 537 residues: uncharacterized protein (537 aa).

The tract at residues 10 to 56 (HHDVEPQNVEEEPPLTGQTIVTEDKLETSAKDKKHESPSMSEDEEGS) is disordered. Residues 31-46 (TEDKLETSAKDKKHES) show a composition bias toward basic and acidic residues. A run of 12 helical transmembrane segments spans residues 90 to 110 (FVAT…TACI), 133 to 153 (LFIV…DIFG), 156 to 176 (WVYV…ALAY), 180 to 200 (MMAI…ANVA), 213 to 233 (GFGI…GSPI), 243 to 263 (WFYW…VLCP), 313 to 333 (PIIM…FLYL), 348 to 368 (YMGA…VVML), 393 to 413 (FLIS…FAFT), 422 to 442 (SPLI…LAMI), 457 to 477 (IAAF…LGII), and 492 to 512 (AFIS…GHLI).

It belongs to the major facilitator superfamily. CAR1 family.

The protein localises to the endoplasmic reticulum. It is found in the golgi apparatus. Its subcellular location is the membrane. This is an uncharacterized protein from Schizosaccharomyces pombe (strain 972 / ATCC 24843) (Fission yeast).